The following is a 112-amino-acid chain: DNA-binding protein TSIB_0525 (112 aa).

This sequence belongs to the PDCD5 family.

The protein is DNA-binding protein TSIB_0525 of Thermococcus sibiricus (strain DSM 12597 / MM 739).